We begin with the raw amino-acid sequence, 183 residues long: Protein Syd (183 aa).

This sequence belongs to the Syd family.

The protein resides in the cell inner membrane. In terms of biological role, interacts with the SecY protein in vivo. May bind preferentially to an uncomplexed state of SecY, thus functioning either as a chelating agent for excess SecY in the cell or as a regulatory factor that negatively controls the translocase function. This Yersinia enterocolitica serotype O:8 / biotype 1B (strain NCTC 13174 / 8081) protein is Protein Syd.